Consider the following 311-residue polypeptide: Olfactory receptor 2Y1 (311 aa).

The Extracellular portion of the chain corresponds to 1 to 25 (MGSFNTSFEDGFILVGFSDWPQLEP). N5 carries N-linked (GlcNAc...) asparagine glycosylation. A helical membrane pass occupies residues 26 to 49 (ILFVFIFIFYSLTLFGNTIIIALS). The Cytoplasmic segment spans residues 50 to 57 (WLDLRLHT). A helical transmembrane segment spans residues 58-79 (PMYFFLSHLSLLDLCFTTSTVP). At 80–100 (QLLINLCGVDRTITRGGCVAQ) the chain is on the extracellular side. A disulfide bridge links C97 with C188. The helical transmembrane segment at 101–120 (LFIYLALGSTECVLLVVMAF) threads the bilayer. Residues 121–139 (DRYAAVCRPLHYMAIMHPH) lie on the Cytoplasmic side of the membrane. The helical transmembrane segment at 140–158 (LCQTLAIASWGAGFVNSLI) threads the bilayer. The Extracellular portion of the chain corresponds to 159 to 194 (QTGLAMAMPLCGHRLNHFFCEMPVFLKLACADTEGT). The chain crosses the membrane as a helical span at residues 195–218 (EAKMFVARVIVVAVPAALILGSYV). Residues 219 to 235 (HIAHAVLRVKSTAGRRK) are Cytoplasmic-facing. Residues 236–258 (AFGTCGSHLLVVFLFYGSAIYTY) traverse the membrane as a helical segment. Over 259 to 271 (LQSIHNYSEREGK) the chain is Extracellular. N-linked (GlcNAc...) asparagine glycosylation is present at N264. Residues 272–291 (FVALFYTIITPILNPLIYTL) form a helical membrane-spanning segment. Topologically, residues 292-311 (RNKDVKGALWKVLWRGRDSG) are cytoplasmic.

The protein belongs to the G-protein coupled receptor 1 family.

It is found in the cell membrane. Its function is as follows. Odorant receptor. In Homo sapiens (Human), this protein is Olfactory receptor 2Y1 (OR2Y1).